The primary structure comprises 100 residues: MARKSLIQRERKRQKLEQKYHLIRRSSKKEISEVPSLSDKWEIHGKLQSPPRNSAPTRLHRRCFSTGRPRANYRDFGLSGHILREMFNACLLPGATRSSW.

This sequence belongs to the universal ribosomal protein uS14 family. In terms of assembly, part of the 30S ribosomal subunit.

It is found in the plastid. It localises to the chloroplast. Binds 16S rRNA, required for the assembly of 30S particles. This Ceratophyllum demersum (Rigid hornwort) protein is Small ribosomal subunit protein uS14c.